The primary structure comprises 539 residues: Phosphoenolpyruvate carboxykinase (ATP) (539 aa).

Substrate is bound by residues Arg64, Tyr206, and Lys212. Residues Lys212, His231, and 247 to 255 (GLSGTGKTT) contribute to the ATP site. 2 residues coordinate Mn(2+): Lys212 and His231. Asp268 is a binding site for Mn(2+). Residues Glu296, Arg332, 448–449 (RI), and Thr454 contribute to the ATP site. Position 332 (Arg332) interacts with substrate.

Belongs to the phosphoenolpyruvate carboxykinase (ATP) family. As to quaternary structure, monomer. The cofactor is Mn(2+).

It is found in the cytoplasm. The catalysed reaction is oxaloacetate + ATP = phosphoenolpyruvate + ADP + CO2. The protein operates within carbohydrate biosynthesis; gluconeogenesis. In terms of biological role, involved in the gluconeogenesis. Catalyzes the conversion of oxaloacetate (OAA) to phosphoenolpyruvate (PEP) through direct phosphoryl transfer between the nucleoside triphosphate and OAA. The protein is Phosphoenolpyruvate carboxykinase (ATP) of Salmonella choleraesuis (strain SC-B67).